Consider the following 119-residue polypeptide: Hemerythrin-like protein (119 aa).

The Fe cation site is built by His26, His56, Glu60, His75, His79, His107, and Asp112.

This sequence belongs to the hemerythrin family.

In terms of biological role, oxygen-binding protein. The oxygen-binding site contains two iron atoms. This chain is Hemerythrin-like protein (nfa1), found in Naegleria fowleri (Brain eating amoeba).